The following is a 413-amino-acid chain: Sporulation-specific protein 74 (413 aa).

The tract at residues 1 to 87 is disordered; that stretch reads MGAGTLLNGL…SEHTDDFNDG (87 aa). The segment covering 69 to 83 has biased composition (basic and acidic residues); that stretch reads HENKDIHERSEHTDD.

In terms of assembly, interacts with itself. Interacts with MPC54, NUD1 and SPO21/MPC70.

The protein localises to the cytoplasm. The protein resides in the cytoskeleton. It is found in the microtubule organizing center. Its subcellular location is the spindle pole body. In terms of biological role, involved in the pathway that organizes the shaping and sizing of the prospore membrane (PSM) during sporulation. Probable component of a core structural unit of the scaffold that initiates synthesis of the prospore membrane. This chain is Sporulation-specific protein 74 (SPO74), found in Saccharomyces cerevisiae (strain ATCC 204508 / S288c) (Baker's yeast).